Consider the following 222-residue polypeptide: Sugar fermentation stimulation protein homolog (222 aa).

Belongs to the SfsA family.

The sequence is that of Sugar fermentation stimulation protein homolog from Thermotoga sp. (strain RQ2).